A 245-amino-acid polypeptide reads, in one-letter code: 1-(5-phosphoribosyl)-5-[(5-phosphoribosylamino)methylideneamino] imidazole-4-carboxamide isomerase (245 aa).

Asp-7 acts as the Proton acceptor in catalysis. The active-site Proton donor is the Asp-129.

This sequence belongs to the HisA/HisF family.

It localises to the cytoplasm. It catalyses the reaction 1-(5-phospho-beta-D-ribosyl)-5-[(5-phospho-beta-D-ribosylamino)methylideneamino]imidazole-4-carboxamide = 5-[(5-phospho-1-deoxy-D-ribulos-1-ylimino)methylamino]-1-(5-phospho-beta-D-ribosyl)imidazole-4-carboxamide. It functions in the pathway amino-acid biosynthesis; L-histidine biosynthesis; L-histidine from 5-phospho-alpha-D-ribose 1-diphosphate: step 4/9. The sequence is that of 1-(5-phosphoribosyl)-5-[(5-phosphoribosylamino)methylideneamino] imidazole-4-carboxamide isomerase from Escherichia fergusonii (strain ATCC 35469 / DSM 13698 / CCUG 18766 / IAM 14443 / JCM 21226 / LMG 7866 / NBRC 102419 / NCTC 12128 / CDC 0568-73).